The sequence spans 158 residues: Transcription elongation factor GreA (158 aa).

Residues 47-74 (NSEYDEAKNEQAFTEGRIIQLENMLKNA) adopt a coiled-coil conformation.

It belongs to the GreA/GreB family.

In terms of biological role, necessary for efficient RNA polymerase transcription elongation past template-encoded arresting sites. The arresting sites in DNA have the property of trapping a certain fraction of elongating RNA polymerases that pass through, resulting in locked ternary complexes. Cleavage of the nascent transcript by cleavage factors such as GreA or GreB allows the resumption of elongation from the new 3'terminus. GreA releases sequences of 2 to 3 nucleotides. This is Transcription elongation factor GreA from Clostridium perfringens (strain ATCC 13124 / DSM 756 / JCM 1290 / NCIMB 6125 / NCTC 8237 / Type A).